A 432-amino-acid polypeptide reads, in one-letter code: Adenylosuccinate synthetase (432 aa).

Residues 13–19 (GDEGKGK) and 41–43 (GHT) contribute to the GTP site. D14 (proton acceptor) is an active-site residue. Residues D14 and G41 each coordinate Mg(2+). Residues 14–17 (DEGK), 39–42 (NAGH), T130, R144, Q225, T240, and R304 each bind IMP. Catalysis depends on H42, which acts as the Proton donor. 300-306 (ATTGRRR) provides a ligand contact to substrate. GTP-binding positions include R306, 332-334 (KLD), and 415-417 (STG).

It belongs to the adenylosuccinate synthetase family. As to quaternary structure, homodimer. Requires Mg(2+) as cofactor.

Its subcellular location is the cytoplasm. It catalyses the reaction IMP + L-aspartate + GTP = N(6)-(1,2-dicarboxyethyl)-AMP + GDP + phosphate + 2 H(+). It functions in the pathway purine metabolism; AMP biosynthesis via de novo pathway; AMP from IMP: step 1/2. Plays an important role in the de novo pathway of purine nucleotide biosynthesis. Catalyzes the first committed step in the biosynthesis of AMP from IMP. This chain is Adenylosuccinate synthetase, found in Enterobacter sp. (strain 638).